A 76-amino-acid polypeptide reads, in one-letter code: Conotoxin Cal5a L3 (76 aa).

Residues 1–22 (MRFYIGLMAALMLTSVLRTDSA) form the signal peptide. A propeptide spanning residues 23–42 (SVGQTGTKSELAVIERVIRQ) is cleaved from the precursor. Pro50 carries the post-translational modification 4-hydroxyproline. A 4-hydroxyproline; partial mark is found at Pro58, Pro62, and Pro64.

The protein belongs to the conotoxin T superfamily. In terms of processing, contains 2 disulfide bonds that can be either 'C1-C3, C2-C4' or 'C1-C4, C2-C3', since these disulfide connectivities have been observed for conotoxins with cysteine framework V (for examples, see AC P0DQQ7 and AC P81755). Expressed by the venom duct.

Its subcellular location is the secreted. Probable neurotoxin with unknown target. Possibly targets ion channels. The protein is Conotoxin Cal5a L3 of Californiconus californicus (California cone).